A 130-amino-acid polypeptide reads, in one-letter code: Small ribosomal subunit protein uS8 (130 aa).

The protein belongs to the universal ribosomal protein uS8 family. As to quaternary structure, part of the 30S ribosomal subunit. Contacts proteins S5 and S12.

Its function is as follows. One of the primary rRNA binding proteins, it binds directly to 16S rRNA central domain where it helps coordinate assembly of the platform of the 30S subunit. The protein is Small ribosomal subunit protein uS8 of Cytophaga hutchinsonii (strain ATCC 33406 / DSM 1761 / CIP 103989 / NBRC 15051 / NCIMB 9469 / D465).